The chain runs to 361 residues: Very-long-chain 3-oxoacyl-CoA reductase (361 aa).

Residues 32-52 (PALILSTVGAAFLLRYTLSIF) traverse the membrane as a helical segment. V79, D133, N163, R198, Y236, K240, V269, and S271 together coordinate NADP(+). Y236 acts as the Proton donor in catalysis. Catalysis depends on K240, which acts as the Lowers pKa of active site Tyr.

Belongs to the short-chain dehydrogenases/reductases (SDR) family.

It is found in the endoplasmic reticulum membrane. The enzyme catalyses a very-long-chain (3R)-3-hydroxyacyl-CoA + NADP(+) = a very-long-chain 3-oxoacyl-CoA + NADPH + H(+). It participates in lipid metabolism; fatty acid biosynthesis. In terms of biological role, component of the microsomal membrane bound fatty acid elongation system, which produces the 26-carbon very long-chain fatty acids (VLCFA) from palmitate. Catalyzes the reduction of the 3-ketoacyl-CoA intermediate that is formed in each cycle of fatty acid elongation. VLCFAs serve as precursors for ceramide and sphingolipids. The chain is Very-long-chain 3-oxoacyl-CoA reductase from Cryptococcus neoformans var. neoformans serotype D (strain B-3501A) (Filobasidiella neoformans).